An 83-amino-acid polypeptide reads, in one-letter code: Ferredoxin (83 aa).

4Fe-4S ferredoxin-type domains follow at residues 2–29 and 31–64; these read ALMI…QGDE and YVIE…KDPS. The [4Fe-4S] cluster site is built by cysteine 9, cysteine 12, cysteine 15, cysteine 19, cysteine 38, cysteine 41, cysteine 50, and cysteine 54.

[4Fe-4S] cluster serves as cofactor.

In terms of biological role, ferredoxins are iron-sulfur proteins that transfer electrons in a wide variety of metabolic reactions. The protein is Ferredoxin (fdx) of Allochromatium vinosum (strain ATCC 17899 / DSM 180 / NBRC 103801 / NCIMB 10441 / D) (Chromatium vinosum).